The sequence spans 417 residues: Frizzy aggregation protein FrzCD (417 aa).

Residues 1-11 show a composition bias toward basic and acidic residues; that stretch reads MSLDTPNEKPA. The segment at 1 to 34 is disordered; that stretch reads MSLDTPNEKPAGKARARKAPASKAGATNAASTSS. Low complexity predominate over residues 21–34; it reads ASKAGATNAASTSS. Residues 144–380 enclose the Methyl-accepting transducer domain; sequence AALRLSSSAN…QVVASMAEIE (237 aa).

Belongs to the methyl-accepting chemotaxis (MCP) protein family. Post-translationally, methylated. Saturated fatty acids capric acid and lauric acid stimulate methylation. Short-chain alcohols, such as isoamyl alcohol, and some other solvents cause demethylation.

It localises to the cytoplasm. Its function is as follows. Methyl-accepting taxis protein necessary for the proper aggregation of cells to form fruiting bodies. Frz genes define a system of signal transduction analogous to the enterobacterial chemotaxis systems. The protein is Frizzy aggregation protein FrzCD (frzCD) of Myxococcus xanthus.